A 257-amino-acid chain; its full sequence is Protein TONNEAU 1b (257 aa).

Residues 73–105 form the LisH domain; the sequence is SGRLLSALICEYLDWAQLNHTLKVYQPECNSAK. 2 disordered regions span residues 148 to 216 and 231 to 257; these read QVMG…EDMP and LDRKTRNLTSSWRNVKDGTSEEEEGKD. Positions 187–199 are enriched in low complexity; it reads SVSASQASGAATS. 2 stretches are compositionally biased toward basic and acidic residues: residues 201–212 and 244–257; these read YRKDESNWRYDT and NVKDGTSEEEEGKD.

In terms of assembly, interacts with CEN1, LNG1/TRM2 and LNG2/TRM1 (via C-terminus).

The protein localises to the cytoplasm. It localises to the cytoskeleton. Functionally, involved in the control of the dynamic organization of the cortical cytoskeleton. May play a role in the organization of microtubule arrays at the centrosome through interaction with centrin 1 (CEN1). In Arabidopsis thaliana (Mouse-ear cress), this protein is Protein TONNEAU 1b (TON1B).